The primary structure comprises 160 residues: CXXC motif containing zinc binding protein (160 aa).

Residues C33, C36, C67, and C70 each coordinate Zn(2+). S75 is subject to Phosphoserine.

It belongs to the UPF0587 family. As to quaternary structure, monomer.

This chain is CXXC motif containing zinc binding protein (Czib), found in Mus musculus (Mouse).